The following is a 424-amino-acid chain: Histidine--tRNA ligase (424 aa).

It belongs to the class-II aminoacyl-tRNA synthetase family. In terms of assembly, homodimer.

It is found in the cytoplasm. It catalyses the reaction tRNA(His) + L-histidine + ATP = L-histidyl-tRNA(His) + AMP + diphosphate + H(+). This is Histidine--tRNA ligase from Escherichia coli O139:H28 (strain E24377A / ETEC).